The sequence spans 288 residues: Homoserine kinase (288 aa).

Residue 79 to 89 (PPARGLGSSSA) participates in ATP binding.

Belongs to the GHMP kinase family. Homoserine kinase subfamily.

The protein resides in the cytoplasm. The enzyme catalyses L-homoserine + ATP = O-phospho-L-homoserine + ADP + H(+). It functions in the pathway amino-acid biosynthesis; L-threonine biosynthesis; L-threonine from L-aspartate: step 4/5. Catalyzes the ATP-dependent phosphorylation of L-homoserine to L-homoserine phosphate. This chain is Homoserine kinase, found in Listeria welshimeri serovar 6b (strain ATCC 35897 / DSM 20650 / CCUG 15529 / CIP 8149 / NCTC 11857 / SLCC 5334 / V8).